The primary structure comprises 272 residues: Undecaprenyl-diphosphatase (272 aa).

7 helical membrane passes run 6 to 26 (SLLI…LPVS), 45 to 65 (AKTF…VMFW), 92 to 112 (THIL…HDVI), 115 to 135 (LFYP…LLAA), 189 to 209 (YAAS…ATVL), 225 to 245 (MFAV…KTFL), and 251 to 271 (ISFV…YMVF).

This sequence belongs to the UppP family.

The protein localises to the cell inner membrane. The enzyme catalyses di-trans,octa-cis-undecaprenyl diphosphate + H2O = di-trans,octa-cis-undecaprenyl phosphate + phosphate + H(+). In terms of biological role, catalyzes the dephosphorylation of undecaprenyl diphosphate (UPP). Confers resistance to bacitracin. The chain is Undecaprenyl-diphosphatase from Pectobacterium carotovorum subsp. carotovorum (strain PC1).